The primary structure comprises 97 residues: MLCVIYRSSKRDQTYLYVEKKDDFSRVPEELMQGFGKPQLAMILPLDGRKKLVNADIEKVKKALTEQGYYLQLPPPPEDLLKQHLSLTGHIRTESEQ.

In terms of domain architecture, YcgL spans 1–85; it reads MLCVIYRSSK…PPEDLLKQHL (85 aa).

The sequence is that of Protein YcgL from Escherichia fergusonii (strain ATCC 35469 / DSM 13698 / CCUG 18766 / IAM 14443 / JCM 21226 / LMG 7866 / NBRC 102419 / NCTC 12128 / CDC 0568-73).